The sequence spans 260 residues: 3-methyl-2-oxobutanoate hydroxymethyltransferase (260 aa).

Asp-44 and Asp-83 together coordinate Mg(2+). Residues 44 to 45, Asp-83, and Lys-113 each bind 3-methyl-2-oxobutanoate; that span reads DS. Mg(2+) is bound at residue Glu-115. Catalysis depends on Glu-182, which acts as the Proton acceptor.

This sequence belongs to the PanB family. In terms of assembly, homodecamer; pentamer of dimers. Requires Mg(2+) as cofactor.

It localises to the cytoplasm. The catalysed reaction is 3-methyl-2-oxobutanoate + (6R)-5,10-methylene-5,6,7,8-tetrahydrofolate + H2O = 2-dehydropantoate + (6S)-5,6,7,8-tetrahydrofolate. Its pathway is cofactor biosynthesis; (R)-pantothenate biosynthesis; (R)-pantoate from 3-methyl-2-oxobutanoate: step 1/2. Functionally, catalyzes the reversible reaction in which hydroxymethyl group from 5,10-methylenetetrahydrofolate is transferred onto alpha-ketoisovalerate to form ketopantoate. The protein is 3-methyl-2-oxobutanoate hydroxymethyltransferase of Synechocystis sp. (strain ATCC 27184 / PCC 6803 / Kazusa).